The following is a 258-amino-acid chain: Phosphonates import ATP-binding protein PhnC 1 (258 aa).

The region spanning isoleucine 2–isoleucine 246 is the ABC transporter domain. Glycine 35–serine 42 provides a ligand contact to ATP.

The protein belongs to the ABC transporter superfamily. Phosphonates importer (TC 3.A.1.9.1) family. As to quaternary structure, the complex is composed of two ATP-binding proteins (PhnC), two transmembrane proteins (PhnE) and a solute-binding protein (PhnD).

It is found in the cell membrane. The catalysed reaction is phosphonate(out) + ATP + H2O = phosphonate(in) + ADP + phosphate + H(+). Functionally, part of the ABC transporter complex PhnCDE involved in phosphonates import. Responsible for energy coupling to the transport system. The sequence is that of Phosphonates import ATP-binding protein PhnC 1 from Oceanobacillus iheyensis (strain DSM 14371 / CIP 107618 / JCM 11309 / KCTC 3954 / HTE831).